Consider the following 341-residue polypeptide: uncharacterized protein (341 aa).

Active-site residues include S111, D247, and H275.

It belongs to the DmpD/TodF/XylF esterase family.

This is an uncharacterized protein from Mycobacterium bovis (strain ATCC BAA-935 / AF2122/97).